The chain runs to 158 residues: MNKPKNSPARKMIAENRKARFNFEILDTLEAGLVLTGTEVKSLRANQANIAESYASFEDGEFWLINSYIPEYTQGNRFNHEPRRLRKLLVSRREMSRLFNSVSREGMTVVPLKLYFNDRGRAKLELALARGKKTHDKRETEKKRDWNREKARLLRDRG.

The segment at 131-158 (GKKTHDKRETEKKRDWNREKARLLRDRG) is disordered. The segment covering 136–158 (DKRETEKKRDWNREKARLLRDRG) has biased composition (basic and acidic residues).

It belongs to the SmpB family.

It is found in the cytoplasm. Functionally, required for rescue of stalled ribosomes mediated by trans-translation. Binds to transfer-messenger RNA (tmRNA), required for stable association of tmRNA with ribosomes. tmRNA and SmpB together mimic tRNA shape, replacing the anticodon stem-loop with SmpB. tmRNA is encoded by the ssrA gene; the 2 termini fold to resemble tRNA(Ala) and it encodes a 'tag peptide', a short internal open reading frame. During trans-translation Ala-aminoacylated tmRNA acts like a tRNA, entering the A-site of stalled ribosomes, displacing the stalled mRNA. The ribosome then switches to translate the ORF on the tmRNA; the nascent peptide is terminated with the 'tag peptide' encoded by the tmRNA and targeted for degradation. The ribosome is freed to recommence translation, which seems to be the essential function of trans-translation. This chain is SsrA-binding protein, found in Brucella abortus biovar 1 (strain 9-941).